The primary structure comprises 322 residues: Porphobilinogen deaminase (322 aa).

An S-(dipyrrolylmethanemethyl)cysteine modification is found at C252.

Belongs to the HMBS family. In terms of assembly, monomer. It depends on dipyrromethane as a cofactor.

The enzyme catalyses 4 porphobilinogen + H2O = hydroxymethylbilane + 4 NH4(+). It functions in the pathway porphyrin-containing compound metabolism; protoporphyrin-IX biosynthesis; coproporphyrinogen-III from 5-aminolevulinate: step 2/4. In terms of biological role, tetrapolymerization of the monopyrrole PBG into the hydroxymethylbilane pre-uroporphyrinogen in several discrete steps. This chain is Porphobilinogen deaminase, found in Caulobacter vibrioides (strain ATCC 19089 / CIP 103742 / CB 15) (Caulobacter crescentus).